The primary structure comprises 450 residues: Adenosylhomocysteinase (450 aa).

3 residues coordinate substrate: threonine 59, aspartate 135, and glutamate 160. Position 161-163 (161-163 (TTT)) interacts with NAD(+). Positions 190 and 194 each coordinate substrate. NAD(+) contacts are provided by residues asparagine 195, 224–229 (GFGDVG), glutamate 247, 303–305 (IGH), and asparagine 350.

It belongs to the adenosylhomocysteinase family. NAD(+) serves as cofactor.

It is found in the cytoplasm. It carries out the reaction S-adenosyl-L-homocysteine + H2O = L-homocysteine + adenosine. Its pathway is amino-acid biosynthesis; L-homocysteine biosynthesis; L-homocysteine from S-adenosyl-L-homocysteine: step 1/1. In terms of biological role, adenosylhomocysteine is a competitive inhibitor of S-adenosyl-L-methionine-dependent methyl transferase reactions; therefore adenosylhomocysteinase may play a key role in the control of methylations via regulation of the intracellular concentration of adenosylhomocysteine. In Candida albicans (strain SC5314 / ATCC MYA-2876) (Yeast), this protein is Adenosylhomocysteinase (SAH1).